The primary structure comprises 116 residues: Large ribosomal subunit protein uL18 (116 aa).

This sequence belongs to the universal ribosomal protein uL18 family. As to quaternary structure, part of the 50S ribosomal subunit; part of the 5S rRNA/L5/L18/L25 subcomplex. Contacts the 5S and 23S rRNAs.

In terms of biological role, this is one of the proteins that bind and probably mediate the attachment of the 5S RNA into the large ribosomal subunit, where it forms part of the central protuberance. In Pseudomonas fluorescens (strain SBW25), this protein is Large ribosomal subunit protein uL18.